The chain runs to 138 residues: Cysteine desulfuration protein SufE (138 aa).

Cysteine 51 functions as the Cysteine persulfide intermediate in the catalytic mechanism.

The protein belongs to the SufE family. As to quaternary structure, homodimer. Interacts with SufS.

It is found in the cytoplasm. The protein operates within cofactor biosynthesis; iron-sulfur cluster biosynthesis. Its function is as follows. Participates in cysteine desulfuration mediated by SufS. Cysteine desulfuration mobilizes sulfur from L-cysteine to yield L-alanine and constitutes an essential step in sulfur metabolism for biosynthesis of a variety of sulfur-containing biomolecules. Functions as a sulfur acceptor for SufS, by mediating the direct transfer of the sulfur atom from the S-sulfanylcysteine of SufS, an intermediate product of cysteine desulfuration process. The protein is Cysteine desulfuration protein SufE of Shigella boydii serotype 18 (strain CDC 3083-94 / BS512).